The sequence spans 1138 residues: Nuclear pore complex-interacting protein family member B13 (1138 aa).

The chain crosses the membrane as a helical span at residues 73–93; it reads VVITLWIVYLWVSLLKTIFWS. Disordered regions lie at residues 242-578 and 747-1138; these read RMGH…NIKT and ERLR…RRLS. Positions 252–263 are enriched in polar residues; that stretch reads QQHSITDNSLSL. Residues 349-359 are compositionally biased toward pro residues; it reads PLPPSAPPSAP. Basic and acidic residues-rich tracts occupy residues 406 to 416, 448 to 458, 490 to 500, 532 to 542, 782 to 792, 824 to 834, 866 to 876, 908 to 918, 950 to 960, and 992 to 1002; these read DNIKTPAERLR.

It belongs to the NPIP family.

The protein resides in the membrane. This Homo sapiens (Human) protein is Nuclear pore complex-interacting protein family member B13.